The sequence spans 313 residues: Homeobox protein CDX-2 (313 aa).

Position 60 is a phosphoserine (Ser60). A disordered region spans residues 113–153; the sequence is HAHHHPHHHPHHPAAAPSCASGLLQTLNPGPPGPAATGAAE. A compositionally biased stretch (basic residues) spans 114–124; that stretch reads AHHHPHHHPHH. Positions 185–215 are interaction with DNA; it reads KDKYRVVYTDHQRLELEKEFHYSRYITIRRK. The segment at residues 185 to 244 is a DNA-binding region (homeobox); that stretch reads KDKYRVVYTDHQRLELEKEFHYSRYITIRRKAELAATLGLSERQVKIWFQNRRAKERKIN. Residues 227-241 form an interaction with 5-mCpG DNA region; the sequence is RQVKIWFQNRRAKER. The segment at 242–313 is disordered; that stretch reads KINKKKLQQQ…GGVLNPTVTQ (72 aa). Composition is skewed to low complexity over residues 249–261 and 271–300; these read QQQQ…QQLA and QPGS…PGVL. At Ser283 the chain carries Phosphoserine. A 4S motif; modulates transactivation activity and protein stability motif is present at residues 283 to 295; that stretch reads SPVSSLQGSVPGS.

The protein belongs to the Caudal homeobox family. In terms of assembly, can bind DNA as a monomer or homodimer. Post-translationally, ubiquitinated, leading to its degradation by the proteasome. In terms of processing, phosphorylation at Ser-60 reduces transactivation capacity. Phosphorylation at Ser-283 reduces transactivation capacity and also increases ubiquitin-dependent proteasome degradation. As to expression, expressed in the intestine.

The protein localises to the nucleus. In terms of biological role, transcription factor which regulates the transcription of multiple genes expressed in the intestinal epithelium. Binds to the promoter of the intestinal sucrase-isomaltase SI and activates SI transcription. Binds to the DNA sequence 5'-ATAAAAACTTAT-3' in the promoter region of VDR and activates VDR transcription. Binds to and activates transcription of LPH. Activates transcription of CLDN2 and intestinal mucin MUC2. Binds to the 5'-AATTTTTTACAACACCT-3' DNA sequence in the promoter region of CA1 and activates CA1 transcription. Important in broad range of functions from early differentiation to maintenance of the intestinal epithelial lining of both the small and large intestine. Binds preferentially to methylated DNA. This chain is Homeobox protein CDX-2 (CDX2), found in Mesocricetus auratus (Golden hamster).